Consider the following 407-residue polypeptide: MNQFNKVCVIGLGYIGLPTAAIFASRKIKVIGVDINQNIVDIINKGKIHIVEPGLDILVHMVVNDGYLKATTLPEEADAFIIAVPTPFKGDNHEPNLDYIEMASKAIAKVLKKGNLVILESTSPVGTTEQMAKWLAEERSDLSFPHQCGEVSDIKIAHCPERVLPGQVIRELVENDRIIGGMTQKCAEYAIRLYKIFVQGECIMTNARTAEMTKLTENSFRDLNIAFANELSILCDKLDINVWELIKLANRHPRVNILQPGCGVGGHCIAVDPWFIVYQNPNEAKIIKTAREVNDNKPNFVVQKIKKKIKDILGPKIACLGLAFKPDIDDLRESPALDIVIKLASENASQILVVEPNIKQLPLKLQNKRNIKLVCLSQALDEADVVAVLVRHKEFIEVQSDKVVSFC.

The protein belongs to the UDP-glucose/GDP-mannose dehydrogenase family.

The enzyme catalyses UDP-N-acetyl-alpha-D-mannosamine + 2 NAD(+) + H2O = UDP-N-acetyl-alpha-D-mannosaminouronate + 2 NADH + 3 H(+). Its pathway is capsule biogenesis; capsule polysaccharide biosynthesis. Its function is as follows. Dehydrogenase involved in the biosynthesis of capsular polysaccharides. Catalyzes the NAD(+)-dependent oxidation of UDP-N-acetyl-D-mannosamine (UDP-ManNAc) to UDP-N-acetyl-D-mannosaminuronic acid (UDP-ManNAcA). In Campylobacter jejuni, this protein is UDP-N-acetyl-D-mannosamine dehydrogenase.